Reading from the N-terminus, the 395-residue chain is Acetate kinase (395 aa).

Mg(2+) is bound at residue Asn-8. Position 15 (Lys-15) interacts with ATP. Arg-89 is a binding site for substrate. The active-site Proton donor/acceptor is the Asp-146. ATP-binding positions include 206–210 (HLGNG), 281–283 (DLR), and 329–333 (GIGEN). Mg(2+) is bound at residue Glu-382.

The protein belongs to the acetokinase family. As to quaternary structure, homodimer. The cofactor is Mg(2+). Requires Mn(2+) as cofactor.

It localises to the cytoplasm. The enzyme catalyses acetate + ATP = acetyl phosphate + ADP. It participates in metabolic intermediate biosynthesis; acetyl-CoA biosynthesis; acetyl-CoA from acetate: step 1/2. In terms of biological role, catalyzes the formation of acetyl phosphate from acetate and ATP. Can also catalyze the reverse reaction. This chain is Acetate kinase, found in Bacillus velezensis (strain DSM 23117 / BGSC 10A6 / LMG 26770 / FZB42) (Bacillus amyloliquefaciens subsp. plantarum).